The following is a 422-amino-acid chain: Histidine--tRNA ligase (422 aa).

The protein belongs to the class-II aminoacyl-tRNA synthetase family. Homodimer.

The protein resides in the cytoplasm. The enzyme catalyses tRNA(His) + L-histidine + ATP = L-histidyl-tRNA(His) + AMP + diphosphate + H(+). In Vibrio campbellii (strain ATCC BAA-1116), this protein is Histidine--tRNA ligase.